We begin with the raw amino-acid sequence, 566 residues long: Proline--tRNA ligase 1 (566 aa).

The protein belongs to the class-II aminoacyl-tRNA synthetase family. ProS type 1 subfamily. Homodimer.

The protein resides in the cytoplasm. The enzyme catalyses tRNA(Pro) + L-proline + ATP = L-prolyl-tRNA(Pro) + AMP + diphosphate. Functionally, catalyzes the attachment of proline to tRNA(Pro) in a two-step reaction: proline is first activated by ATP to form Pro-AMP and then transferred to the acceptor end of tRNA(Pro). As ProRS can inadvertently accommodate and process non-cognate amino acids such as alanine and cysteine, to avoid such errors it has two additional distinct editing activities against alanine. One activity is designated as 'pretransfer' editing and involves the tRNA(Pro)-independent hydrolysis of activated Ala-AMP. The other activity is designated 'posttransfer' editing and involves deacylation of mischarged Ala-tRNA(Pro). The misacylated Cys-tRNA(Pro) is not edited by ProRS. The sequence is that of Proline--tRNA ligase 1 from Bacillus thuringiensis subsp. konkukian (strain 97-27).